Consider the following 591-residue polypeptide: L-fucose isomerase (591 aa).

Residues Glu337 and Asp361 each act as proton acceptor in the active site. Residues Glu337, Asp361, and His528 each contribute to the Mn(2+) site.

It belongs to the L-fucose isomerase family. As to quaternary structure, homohexamer. It depends on Mn(2+) as a cofactor.

It localises to the cytoplasm. The catalysed reaction is L-fucose = L-fuculose. It functions in the pathway carbohydrate degradation; L-fucose degradation; L-lactaldehyde and glycerone phosphate from L-fucose: step 1/3. Its function is as follows. Converts the aldose L-fucose into the corresponding ketose L-fuculose. The protein is L-fucose isomerase of Salmonella heidelberg (strain SL476).